The sequence spans 99 residues: DNA-directed RNA polymerase subunit omega (99 aa).

The protein belongs to the RNA polymerase subunit omega family. The RNAP catalytic core consists of 2 alpha, 1 beta, 1 beta' and 1 omega subunit. When a sigma factor is associated with the core the holoenzyme is formed, which can initiate transcription.

The catalysed reaction is RNA(n) + a ribonucleoside 5'-triphosphate = RNA(n+1) + diphosphate. Functionally, promotes RNA polymerase assembly. Latches the N- and C-terminal regions of the beta' subunit thereby facilitating its interaction with the beta and alpha subunits. This Xanthomonas oryzae pv. oryzae (strain MAFF 311018) protein is DNA-directed RNA polymerase subunit omega.